Reading from the N-terminus, the 127-residue chain is C-C motif chemokine 28 (127 aa).

Positions 1–19 are cleaved as a signal peptide; the sequence is MQQRGLAIVALAVCAALHA. 2 disulfides stabilise this stretch: Cys-30-Cys-58 and Cys-31-Cys-73. Asn-78 carries an N-linked (GlcNAc...) asparagine glycan. The span at 92–115 shows a compositional bias: basic residues; sequence KNGKGNVCHRKKHHGKRNSNRAHQ. The disordered stretch occupies residues 92–127; that stretch reads KNGKGNVCHRKKHHGKRNSNRAHQGKHETYGHKTPY. Positions 116–127 are enriched in basic and acidic residues; that stretch reads GKHETYGHKTPY.

It belongs to the intercrine beta (chemokine CC) family. In terms of tissue distribution, preferentially expressed by epithelial cells of diverse tissues including normal and pathological colon, salivary gland, mammary gland, trachea and rectum. Also found in prostate, spleen, thyroid, psoriasis skin and in lower levels in peripheral blood leukocytes, small intestine, Peyer patches, stomach and normal skin.

The protein resides in the secreted. Functionally, chemotactic activity for resting CD4, CD8 T-cells and eosinophils. Binds to CCR3 and CCR10 and induces calcium mobilization in a dose-dependent manner. This chain is C-C motif chemokine 28 (CCL28), found in Homo sapiens (Human).